We begin with the raw amino-acid sequence, 155 residues long: Ribosome maturation factor RimP (155 aa).

Belongs to the RimP family.

It localises to the cytoplasm. Required for maturation of 30S ribosomal subunits. This chain is Ribosome maturation factor RimP, found in Staphylococcus saprophyticus subsp. saprophyticus (strain ATCC 15305 / DSM 20229 / NCIMB 8711 / NCTC 7292 / S-41).